We begin with the raw amino-acid sequence, 142 residues long: Galactose-binding lectin l-1 (142 aa).

The Galectin domain occupies 3 to 134 (FVEVKNLIMK…DATVKNISVN (132 aa)). 68 to 74 (WQEEQRD) provides a ligand contact to a beta-D-galactoside. Residue N130 is glycosylated (N-linked (GlcNAc...) asparagine).

In terms of assembly, homodimer. Post-translationally, the N-terminus is blocked. In terms of tissue distribution, skin; highest expression in that of individuals showing resistance to infectious disease.

Its subcellular location is the secreted. Functionally, involved in host defense at the body surface. Causes agglutination of the Gram-positive bacterium S.difficile. Possesses calcium-independent hemagglutinating activity. In Anguilla japonica (Japanese eel), this protein is Galactose-binding lectin l-1.